The sequence spans 903 residues: Protein translocase subunit SecA (903 aa).

ATP-binding positions include Gln-87, 105–109, and Asp-512; that span reads GEGKT. Zn(2+)-binding residues include Cys-887, Cys-889, Cys-898, and His-899.

This sequence belongs to the SecA family. Monomer and homodimer. Part of the essential Sec protein translocation apparatus which comprises SecA, SecYEG and auxiliary proteins SecDF-YajC and YidC. Requires Zn(2+) as cofactor.

It is found in the cell inner membrane. The protein localises to the cytoplasm. It catalyses the reaction ATP + H2O + cellular proteinSide 1 = ADP + phosphate + cellular proteinSide 2.. Functionally, part of the Sec protein translocase complex. Interacts with the SecYEG preprotein conducting channel. Has a central role in coupling the hydrolysis of ATP to the transfer of proteins into and across the cell membrane, serving both as a receptor for the preprotein-SecB complex and as an ATP-driven molecular motor driving the stepwise translocation of polypeptide chains across the membrane. This is Protein translocase subunit SecA from Photorhabdus laumondii subsp. laumondii (strain DSM 15139 / CIP 105565 / TT01) (Photorhabdus luminescens subsp. laumondii).